Consider the following 434-residue polypeptide: Glutamyl-tRNA reductase (434 aa).

Residues 49 to 52, Ser109, 114 to 116, and Gln120 contribute to the substrate site; these read TCNR and EPQ. The active-site Nucleophile is Cys50. 189-194 provides a ligand contact to NADP(+); the sequence is GAGEMC.

It belongs to the glutamyl-tRNA reductase family. Homodimer.

It catalyses the reaction (S)-4-amino-5-oxopentanoate + tRNA(Glu) + NADP(+) = L-glutamyl-tRNA(Glu) + NADPH + H(+). Its pathway is porphyrin-containing compound metabolism; protoporphyrin-IX biosynthesis; 5-aminolevulinate from L-glutamyl-tRNA(Glu): step 1/2. Catalyzes the NADPH-dependent reduction of glutamyl-tRNA(Glu) to glutamate 1-semialdehyde (GSA). In Geobacter sulfurreducens (strain ATCC 51573 / DSM 12127 / PCA), this protein is Glutamyl-tRNA reductase.